A 445-amino-acid polypeptide reads, in one-letter code: MSKNLYIKTYGCQMNVYDSVKMQDLLYPFGYEPTENIEEADVIILNTCHIREKAAEKTYSELGRIKKLQDTRKKQGLNSAIIVVAGCVAQAEGEEIFTRTPYVDIVVGPQSYYNLPELISKIVRHAKHLIDLDFVEEAKFDNLPEQLYPQGASSFISVQEGCDKFCTFCVVPYTRGAEFSRNVEQVYREALQVVSGGAKEIMLLGQNVNAYNWKGSADKIFSLADLLKHLAQIPNLERLRYMTSHPIDMTDDLIQLHGTEPKLMPFLHLPVQSGSNKILKAMNRKHDREYYFDIINRLREARPDIVLSSDFIVGFPGETDEDFEDTLDLVRRVKYGQCYSFKYSPRPGTPGATRTDQIPEHIKSERLTILQKELMDQQLACNESCVGSTIKVLFDRSGKFDDQIIGKTIYMQSVYIQNPNKSLLGKIIDVKITKASLNSLTGEIL.

An MTTase N-terminal domain is found at 3-124 (KNLYIKTYGC…LPELISKIVR (122 aa)). Positions 12, 48, 87, 162, 166, and 169 each coordinate [4Fe-4S] cluster. The Radical SAM core domain occupies 148-380 (YPQGASSFIS…QKELMDQQLA (233 aa)). The TRAM domain occupies 383 to 445 (ESCVGSTIKV…SLNSLTGEIL (63 aa)).

The protein belongs to the methylthiotransferase family. MiaB subfamily. In terms of assembly, monomer. The cofactor is [4Fe-4S] cluster.

It is found in the cytoplasm. It carries out the reaction N(6)-dimethylallyladenosine(37) in tRNA + (sulfur carrier)-SH + AH2 + 2 S-adenosyl-L-methionine = 2-methylsulfanyl-N(6)-dimethylallyladenosine(37) in tRNA + (sulfur carrier)-H + 5'-deoxyadenosine + L-methionine + A + S-adenosyl-L-homocysteine + 2 H(+). In terms of biological role, catalyzes the methylthiolation of N6-(dimethylallyl)adenosine (i(6)A), leading to the formation of 2-methylthio-N6-(dimethylallyl)adenosine (ms(2)i(6)A) at position 37 in tRNAs that read codons beginning with uridine. This Rickettsia akari (strain Hartford) protein is tRNA-2-methylthio-N(6)-dimethylallyladenosine synthase.